The following is an 89-amino-acid chain: Small ribosomal subunit protein uS15 (89 aa).

The protein belongs to the universal ribosomal protein uS15 family. In terms of assembly, part of the 30S ribosomal subunit. Forms a bridge to the 50S subunit in the 70S ribosome, contacting the 23S rRNA.

In terms of biological role, one of the primary rRNA binding proteins, it binds directly to 16S rRNA where it helps nucleate assembly of the platform of the 30S subunit by binding and bridging several RNA helices of the 16S rRNA. Functionally, forms an intersubunit bridge (bridge B4) with the 23S rRNA of the 50S subunit in the ribosome. The chain is Small ribosomal subunit protein uS15 from Buchnera aphidicola subsp. Schizaphis graminum (strain Sg).